A 1402-amino-acid polypeptide reads, in one-letter code: DNA-directed RNA polymerase subunit beta' (1402 aa).

Zn(2+) contacts are provided by C73, C75, C88, and C91. Positions 464, 466, and 468 each coordinate Mg(2+). Zn(2+) contacts are provided by C812, C886, C893, and C896.

It belongs to the RNA polymerase beta' chain family. As to quaternary structure, the RNAP catalytic core consists of 2 alpha, 1 beta, 1 beta' and 1 omega subunit. When a sigma factor is associated with the core the holoenzyme is formed, which can initiate transcription. Requires Mg(2+) as cofactor. It depends on Zn(2+) as a cofactor.

The enzyme catalyses RNA(n) + a ribonucleoside 5'-triphosphate = RNA(n+1) + diphosphate. Its function is as follows. DNA-dependent RNA polymerase catalyzes the transcription of DNA into RNA using the four ribonucleoside triphosphates as substrates. This Rhodopseudomonas palustris (strain ATCC BAA-98 / CGA009) protein is DNA-directed RNA polymerase subunit beta'.